The following is a 261-amino-acid chain: Tryptophan synthase alpha chain (261 aa).

Active-site proton acceptor residues include Glu-49 and Asp-60.

This sequence belongs to the TrpA family. As to quaternary structure, tetramer of two alpha and two beta chains.

The catalysed reaction is (1S,2R)-1-C-(indol-3-yl)glycerol 3-phosphate + L-serine = D-glyceraldehyde 3-phosphate + L-tryptophan + H2O. It participates in amino-acid biosynthesis; L-tryptophan biosynthesis; L-tryptophan from chorismate: step 5/5. Its function is as follows. The alpha subunit is responsible for the aldol cleavage of indoleglycerol phosphate to indole and glyceraldehyde 3-phosphate. This chain is Tryptophan synthase alpha chain, found in Roseiflexus castenholzii (strain DSM 13941 / HLO8).